Here is a 461-residue protein sequence, read N- to C-terminus: UDP-N-acetylmuramate--L-alanine ligase (461 aa).

Position 112–118 (112–118 (GTHGKTT)) interacts with ATP.

This sequence belongs to the MurCDEF family.

It is found in the cytoplasm. The catalysed reaction is UDP-N-acetyl-alpha-D-muramate + L-alanine + ATP = UDP-N-acetyl-alpha-D-muramoyl-L-alanine + ADP + phosphate + H(+). The protein operates within cell wall biogenesis; peptidoglycan biosynthesis. In terms of biological role, cell wall formation. The chain is UDP-N-acetylmuramate--L-alanine ligase from Hydrogenovibrio crunogenus (strain DSM 25203 / XCL-2) (Thiomicrospira crunogena).